The primary structure comprises 361 residues: S-adenosylmethionine:tRNA ribosyltransferase-isomerase (361 aa).

The protein belongs to the QueA family. Monomer.

The protein resides in the cytoplasm. The catalysed reaction is 7-aminomethyl-7-carbaguanosine(34) in tRNA + S-adenosyl-L-methionine = epoxyqueuosine(34) in tRNA + adenine + L-methionine + 2 H(+). Its pathway is tRNA modification; tRNA-queuosine biosynthesis. Transfers and isomerizes the ribose moiety from AdoMet to the 7-aminomethyl group of 7-deazaguanine (preQ1-tRNA) to give epoxyqueuosine (oQ-tRNA). The polypeptide is S-adenosylmethionine:tRNA ribosyltransferase-isomerase (Methylocella silvestris (strain DSM 15510 / CIP 108128 / LMG 27833 / NCIMB 13906 / BL2)).